The chain runs to 503 residues: Cytochrome P450 3A13 (503 aa).

Cysteine 442 contacts heme.

It belongs to the cytochrome P450 family. The cofactor is heme.

The protein localises to the endoplasmic reticulum membrane. It localises to the microsome membrane. The catalysed reaction is an organic molecule + reduced [NADPH--hemoprotein reductase] + O2 = an alcohol + oxidized [NADPH--hemoprotein reductase] + H2O + H(+). Can activate aflatoxin B1 to a genotoxic product. This chain is Cytochrome P450 3A13 (Cyp3a13), found in Mus musculus (Mouse).